We begin with the raw amino-acid sequence, 70 residues long: Large ribosomal subunit protein bL32 (70 aa).

The segment covering 1-19 has biased composition (basic residues); sequence MAVPKRKTTPSRRGMRRSH. Positions 1 to 21 are disordered; it reads MAVPKRKTTPSRRGMRRSHQA.

It belongs to the bacterial ribosomal protein bL32 family.

This chain is Large ribosomal subunit protein bL32, found in Gluconobacter oxydans (strain 621H) (Gluconobacter suboxydans).